Here is a 530-residue protein sequence, read N- to C-terminus: UDP-glucuronosyltransferase 2B17 (530 aa).

Positions 1-23 are cleaved as a signal peptide; sequence MPGKWISALLLLQISCCFRSVKC. N316 and N483 each carry an N-linked (GlcNAc...) asparagine glycan. A helical membrane pass occupies residues 494–510; it reads VIGFLLSCVATTIVLSV.

The protein belongs to the UDP-glycosyltransferase family.

It localises to the endoplasmic reticulum membrane. It carries out the reaction glucuronate acceptor + UDP-alpha-D-glucuronate = acceptor beta-D-glucuronoside + UDP + H(+). It catalyses the reaction 17alpha-estradiol + UDP-alpha-D-glucuronate = 17alpha-estradiol 3-O-(beta-D-glucuronate) + UDP + H(+). The enzyme catalyses 17alpha-estradiol + UDP-alpha-D-glucuronate = 17alpha-estradiol 17-O-(beta-D-glucuronate) + UDP + H(+). The catalysed reaction is 17beta-estradiol + UDP-alpha-D-glucuronate = 17beta-estradiol 17-O-(beta-D-glucuronate) + UDP + H(+). It carries out the reaction 17beta-hydroxy-5alpha-androstan-3-one + UDP-alpha-D-glucuronate = 5alpha-dihydrotestosterone 17-O-(beta-D-glucuronate) + UDP + H(+). It catalyses the reaction testosterone + UDP-alpha-D-glucuronate = testosterone 17-O-(beta-D-glucuronate) + UDP + H(+). In terms of biological role, UDP-glucuronosyltransferase (UGT) that catalyzes phase II biotransformation reactions in which lipophilic substrates are conjugated with glucuronic acid to increase the metabolite's water solubility, thereby facilitating excretion into either the urine or bile. Catalyzes the glucuronidation of endogenous steroid hormones such as androgens (epitestosterone, androsterone) and estrogens (estradiol, epiestradiol). This Mus musculus (Mouse) protein is UDP-glucuronosyltransferase 2B17.